The sequence spans 493 residues: Neuronal pentraxin receptor (493 aa).

At 1–2 (MK) the chain is on the cytoplasmic side. The chain crosses the membrane as a helical; Signal-anchor for type II membrane protein span at residues 3–23 (FLAVLLAAGMLAFLGAVICII). Residues 24-493 (ASVPLAASPA…FDVCKGRAKA (470 aa)) are Extracellular-facing. The tract at residues 37–72 (PGGTDNASAASAAGGSGPQRSLSALHSAGGSAGPSV) is disordered. A glycan (N-linked (GlcNAc...) asparagine) is linked at Asn42. The segment covering 57–72 (SLSALHSAGGSAGPSV) has biased composition (low complexity). N-linked (GlcNAc...) asparagine glycosylation is present at Asn211. One can recognise a Pentraxin (PTX) domain in the interval 285–487 (DAFKVSIPIR…GAKKAAFDVC (203 aa)). An intrachain disulfide couples Cys315 to Cys376. Residues Asn340, Glu418, Gln419, Asp420, and Gln430 each coordinate Ca(2+). N-linked (GlcNAc...) asparagine glycosylation is present at Asn456.

Heteropentamer with NPTX1 and/or NPTX2. Also binds taipoxin-associated calcium-binding protein 49 (TCBP49/RCN2). Interacts with KLHL2. Requires Ca(2+) as cofactor. Ubiquitinated by a cullin-RING-based BCR (BTB-CUL3-RBX1) E3 ubiquitin-protein ligase complex containing KLHL2.

It localises to the membrane. Its function is as follows. May be involved in mediating uptake of synaptic material during synapse remodeling or in mediating the synaptic clustering of AMPA glutamate receptors at a subset of excitatory synapses. The protein is Neuronal pentraxin receptor (Nptxr) of Mus musculus (Mouse).